A 394-amino-acid polypeptide reads, in one-letter code: Elongation factor Tu (394 aa).

A tr-type G domain is found at 10–204 (KEHANIGTIG…AVDTYIPTPE (195 aa)). Residues 19-26 (GHVDHGKT) are G1. Residue 19-26 (GHVDHGKT) coordinates GTP. Thr-26 is a binding site for Mg(2+). Residues 60–64 (GITIN) are G2. Residues 81–84 (DCPG) form a G3 region. Residues 81–85 (DCPGH) and 136–139 (NKVD) contribute to the GTP site. The segment at 136–139 (NKVD) is G4. The G5 stretch occupies residues 174–176 (SAL).

It belongs to the TRAFAC class translation factor GTPase superfamily. Classic translation factor GTPase family. EF-Tu/EF-1A subfamily. In terms of assembly, monomer.

The protein localises to the cytoplasm. It carries out the reaction GTP + H2O = GDP + phosphate + H(+). GTP hydrolase that promotes the GTP-dependent binding of aminoacyl-tRNA to the A-site of ribosomes during protein biosynthesis. This is Elongation factor Tu from Staphylococcus aureus (strain COL).